We begin with the raw amino-acid sequence, 45 residues long: Mu-conotoxin-like Cal 12.1.2g (45 aa).

4 disulfide bridges follow: C3–C16, C11–C28, C18–C33, and C27–C39. P23 bears the 4-hydroxyproline mark. 6'-bromotryptophan occurs at positions 37 and 38. 4-hydroxyproline is present on P40.

In terms of tissue distribution, expressed by the venom duct.

The protein resides in the secreted. Its function is as follows. Mu-conotoxins block voltage-gated sodium channels. This toxin reversibly blocks voltage-gated sodium channel in cephalopods, with no alteration in the voltage dependence of sodium conductance or on the kinetics of inactivation. The chain is Mu-conotoxin-like Cal 12.1.2g from Californiconus californicus (California cone).